Consider the following 199-residue polypeptide: Peptidyl-tRNA hydrolase (199 aa).

Tyr-18 is a tRNA binding site. His-23 acts as the Proton acceptor in catalysis. Tyr-72, Asn-74, and Asn-120 together coordinate tRNA.

It belongs to the PTH family. Monomer.

Its subcellular location is the cytoplasm. The enzyme catalyses an N-acyl-L-alpha-aminoacyl-tRNA + H2O = an N-acyl-L-amino acid + a tRNA + H(+). Its function is as follows. Hydrolyzes ribosome-free peptidyl-tRNAs (with 1 or more amino acids incorporated), which drop off the ribosome during protein synthesis, or as a result of ribosome stalling. Functionally, catalyzes the release of premature peptidyl moieties from peptidyl-tRNA molecules trapped in stalled 50S ribosomal subunits, and thus maintains levels of free tRNAs and 50S ribosomes. This chain is Peptidyl-tRNA hydrolase, found in Bifidobacterium animalis subsp. lactis (strain AD011).